A 244-amino-acid chain; its full sequence is MQHRDVGKPTLSYSGRLIAQMTEIDEALKPVLPRELTTVSDEVRAVPAPPLPVLAEPFALRPADPDADAEMISEWMNRPHLVEAWEYPWPPQRWRRHLKAQIDGEYSRPLIGSFKGADVVYVELYRAAKDSIAPRYAADPHDIGIHAAIADLRFVNRGFAPLLLPRVVASVFEIDPRCRRIMFDPDHRNTGARRVCEFAGCTFLGEHDMANRRMALYALPRTPADAPPTGDLQSSPVGESISSS.

Histidine 146 contributes to the substrate binding site. The Proton acceptor role is filled by aspartate 184. The segment at 224-244 (ADAPPTGDLQSSPVGESISSS) is disordered. Residues 231-244 (DLQSSPVGESISSS) are compositionally biased toward polar residues.

Belongs to the lysine N-acyltransferase MbtK family. In terms of assembly, monomer.

It participates in siderophore biosynthesis; mycobactin biosynthesis. Acyltransferase required for the direct transfer of medium- to long-chain fatty acyl moieties from a carrier protein (MbtL) on to the epsilon-amino group of lysine residue in the mycobactin core. This Mycobacterium sp. (strain MCS) protein is Lysine N-acyltransferase MbtK (mbtK).